A 233-amino-acid chain; its full sequence is DNA repair protein RecO (233 aa).

Belongs to the RecO family.

Its function is as follows. Involved in DNA repair and RecF pathway recombination. This is DNA repair protein RecO from Pseudomonas aeruginosa (strain LESB58).